The sequence spans 732 residues: Translation initiation factor IF-2 (732 aa).

Residues P40–K147 form a disordered region. Basic and acidic residues predominate over residues V42 to K67. A compositionally biased stretch (basic residues) spans K90 to G103. Basic and acidic residues predominate over residues K104–I117. Residues F118 to A129 are compositionally biased toward basic residues. Residues E233–K402 form the tr-type G domain. Residues G242–T249 form a G1 region. Residue G242–T249 coordinates GTP. Residues G267–H271 are G2. A G3 region spans residues D288–G291. Residues D288 to H292 and N342 to D345 each bind GTP. The tract at residues N342 to D345 is G4. Positions S378–K380 are G5.

Belongs to the TRAFAC class translation factor GTPase superfamily. Classic translation factor GTPase family. IF-2 subfamily.

Its subcellular location is the cytoplasm. Its function is as follows. One of the essential components for the initiation of protein synthesis. Protects formylmethionyl-tRNA from spontaneous hydrolysis and promotes its binding to the 30S ribosomal subunits. Also involved in the hydrolysis of GTP during the formation of the 70S ribosomal complex. The polypeptide is Translation initiation factor IF-2 (Geobacillus sp. (strain WCH70)).